The chain runs to 138 residues: Putative acyl-CoA thioesterase YneP (138 aa).

Asp16 is an active-site residue.

The protein belongs to the 4-hydroxybenzoyl-CoA thioesterase family.

Its function is as follows. Has acyl-CoA thioesterase activity. This chain is Putative acyl-CoA thioesterase YneP (yneP), found in Bacillus subtilis (strain 168).